The chain runs to 201 residues: ATP-dependent Clp protease proteolytic subunit (201 aa).

Serine 98 functions as the Nucleophile in the catalytic mechanism. Histidine 123 is a catalytic residue.

This sequence belongs to the peptidase S14 family. As to quaternary structure, fourteen ClpP subunits assemble into 2 heptameric rings which stack back to back to give a disk-like structure with a central cavity, resembling the structure of eukaryotic proteasomes.

The protein localises to the cytoplasm. The catalysed reaction is Hydrolysis of proteins to small peptides in the presence of ATP and magnesium. alpha-casein is the usual test substrate. In the absence of ATP, only oligopeptides shorter than five residues are hydrolyzed (such as succinyl-Leu-Tyr-|-NHMec, and Leu-Tyr-Leu-|-Tyr-Trp, in which cleavage of the -Tyr-|-Leu- and -Tyr-|-Trp bonds also occurs).. Cleaves peptides in various proteins in a process that requires ATP hydrolysis. Has a chymotrypsin-like activity. Plays a major role in the degradation of misfolded proteins. The chain is ATP-dependent Clp protease proteolytic subunit from Rickettsia felis (strain ATCC VR-1525 / URRWXCal2) (Rickettsia azadi).